The following is a 271-amino-acid chain: uncharacterized protein (271 aa).

The tract at residues 1 to 202 is disordered; that stretch reads MLNSPGTRRP…APSSALSHQG (202 aa). Positions 10–23 are enriched in basic and acidic residues; sequence PVKEAQKYGEDSQK. 2 stretches are compositionally biased toward low complexity: residues 33 to 50 and 59 to 73; these read RSSV…SSSP and GRPS…TSAP. The span at 92-101 shows a compositional bias: polar residues; that stretch reads TRSSANQLPQ. Residues 121 to 142 are compositionally biased toward basic residues; it reads LRRRSHGDRCVPRSRRRPRPRP.

This is an uncharacterized protein from Homo sapiens (Human).